The sequence spans 476 residues: Phosphomethylpyrimidine synthase (476 aa).

Residues 1–27 (MSTQLQHARDGTVTDAMRRVADREGRD) are disordered. Basic and acidic residues predominate over residues 7-27 (HARDGTVTDAMRRVADREGRD). Substrate-binding positions include N67, M96, Y125, H160, 180–182 (SRG), 221–224 (DGLR), and E260. H264 contributes to the Zn(2+) binding site. Y287 lines the substrate pocket. H328 lines the Zn(2+) pocket. Positions 408, 411, and 416 each coordinate [4Fe-4S] cluster. The tract at residues 425–476 (RDAGDDADDMTELTTETDLSESAAAEVNRPPTGTHDAPAAEQAPSPGDDDDD) is disordered. The segment covering 436–447 (ELTTETDLSESA) has biased composition (low complexity).

It belongs to the ThiC family. [4Fe-4S] cluster serves as cofactor.

It carries out the reaction 5-amino-1-(5-phospho-beta-D-ribosyl)imidazole + S-adenosyl-L-methionine = 4-amino-2-methyl-5-(phosphooxymethyl)pyrimidine + CO + 5'-deoxyadenosine + formate + L-methionine + 3 H(+). It participates in cofactor biosynthesis; thiamine diphosphate biosynthesis. Catalyzes the synthesis of the hydroxymethylpyrimidine phosphate (HMP-P) moiety of thiamine from aminoimidazole ribotide (AIR) in a radical S-adenosyl-L-methionine (SAM)-dependent reaction. In Halobacterium salinarum (strain ATCC 29341 / DSM 671 / R1), this protein is Phosphomethylpyrimidine synthase.